Reading from the N-terminus, the 529-residue chain is Retinoic acid-induced protein 2 (529 aa).

Disordered stretches follow at residues M1–A21 and S400–S419. The span at G407 to H416 shows a compositional bias: polar residues.

This Mus musculus (Mouse) protein is Retinoic acid-induced protein 2 (Rai2).